We begin with the raw amino-acid sequence, 540 residues long: Chaperonin GroEL 2 (540 aa).

Residues 29–32, 86–90, Gly-413, and Asp-492 contribute to the ATP site; these read TLGP and DGTTT. Residues 521–540 are disordered; the sequence is KPEKEKASVPGGGDMGGMDF. The segment covering 530–540 has biased composition (gly residues); it reads PGGGDMGGMDF.

This sequence belongs to the chaperonin (HSP60) family. In terms of assembly, forms a cylinder of 14 subunits composed of two heptameric rings stacked back-to-back. Interacts with the co-chaperonin GroES.

It is found in the secreted. It localises to the capsule. Its subcellular location is the cell surface. The protein localises to the cell wall. It catalyses the reaction ATP + H2O + a folded polypeptide = ADP + phosphate + an unfolded polypeptide.. In terms of biological role, together with its co-chaperonin GroES, plays an essential role in assisting protein folding. The GroEL-GroES system forms a nano-cage that allows encapsulation of the non-native substrate proteins and provides a physical environment optimized to promote and accelerate protein folding. The protein is Chaperonin GroEL 2 of Mycobacterium tuberculosis (strain ATCC 25177 / H37Ra).